A 340-amino-acid polypeptide reads, in one-letter code: Heat-inducible transcription repressor HrcA (340 aa).

It belongs to the HrcA family.

In terms of biological role, negative regulator of class I heat shock genes (grpE-dnaK-dnaJ and groELS operons). Prevents heat-shock induction of these operons. In Burkholderia thailandensis (strain ATCC 700388 / DSM 13276 / CCUG 48851 / CIP 106301 / E264), this protein is Heat-inducible transcription repressor HrcA.